The following is a 188-amino-acid chain: HGPRTase-like protein (188 aa).

Belongs to the purine/pyrimidine phosphoribosyltransferase family. Archaeal HPRT subfamily.

May catalyze a purine salvage reaction, the substrate is unknown. The polypeptide is HGPRTase-like protein (Halobacterium salinarum (strain ATCC 29341 / DSM 671 / R1)).